Here is a 142-residue protein sequence, read N- to C-terminus: Protein tost-1 (142 aa).

The disordered stretch occupies residues 97–123; that stretch reads KVFEEEDKENAPTKKAVLKPSSTDEKK.

As to quaternary structure, component of the tost-1 variant of the PETISCO complex (also called the pid-3, erh-2, tofu-6, and ife-3 small RNA complex) containing at least tost-1, tofu-6, ife-3, pid-3, and erh-2, which plays an essential role in embryogenesis. Within the complex interacts with erh-2. Within the complex interacts with pid-3 and tofu-6. In contrast to the pid-1 variant of the PETISCO complex, the tost-1 variant of the PETISCO complex plays a minor role in the biogenesis of a class of 21 nucleotide PIWI-interacting RNAs (piRNAs) that possess a uracil residue at the 5'-end (also called 21U-RNAs). Expressed in the germline.

The protein resides in the cytoplasm. It is found in the nucleus. Its function is as follows. Component of the tost-1 variant of the PETISCO complex which plays an essential role in embryogenesis. Within the complex acts as an adapter which binds to the complex via erh-2. Does not seem to play a role in the biogenesis of a class of 21 nucleotide PIWI-interacting RNAs (piRNAs) that possess a uracil residue at the 5'-end (also called 21U-RNAs). May inhibit 21U-RNA accumulation. Required for chromosome segregation and cell division in early embryos. In Caenorhabditis elegans, this protein is Protein tost-1.